The sequence spans 361 residues: 3-dehydroquinate synthase (361 aa).

Residues 106-110 (GVVGD), 130-131 (TT), K143, and K152 each bind NAD(+). Residues E185, H248, and H265 each coordinate Zn(2+).

Belongs to the sugar phosphate cyclases superfamily. Dehydroquinate synthase family. NAD(+) is required as a cofactor. Co(2+) serves as cofactor. It depends on Zn(2+) as a cofactor.

It localises to the cytoplasm. The catalysed reaction is 7-phospho-2-dehydro-3-deoxy-D-arabino-heptonate = 3-dehydroquinate + phosphate. Its pathway is metabolic intermediate biosynthesis; chorismate biosynthesis; chorismate from D-erythrose 4-phosphate and phosphoenolpyruvate: step 2/7. In terms of biological role, catalyzes the conversion of 3-deoxy-D-arabino-heptulosonate 7-phosphate (DAHP) to dehydroquinate (DHQ). The chain is 3-dehydroquinate synthase from Leptospira interrogans serogroup Icterohaemorrhagiae serovar copenhageni (strain Fiocruz L1-130).